A 795-amino-acid chain; its full sequence is Forkhead box protein P4 (795 aa).

The span at methionine 1–alanine 25 shows a compositional bias: polar residues. Residues methionine 1–methionine 62 are disordered. Low complexity predominate over residues alanine 36–aspartate 45. Phosphoserine occurs at positions 58 and 92. Lysine 181 is covalently cross-linked (Glycyl lysine isopeptide (Lys-Gly) (interchain with G-Cter in SUMO2)). Disordered regions lie at residues proline 233–glutamine 252 and threonine 265–glycine 310. A compositionally biased stretch (basic and acidic residues) spans serine 292 to proline 303. Residues glycine 312–histidine 337 form a C2H2-type zinc finger. Residues valine 354 to leucine 375 form a leucine-zipper region. The disordered stretch occupies residues proline 379–lysine 437. Lysine 383 is covalently cross-linked (Glycyl lysine isopeptide (Lys-Gly) (interchain with G-Cter in SUMO2)). A DNA-binding region (fork-head) is located at residues arginine 459–leucine 549. Serine 546 carries the phosphoserine modification. The interval alanine 589 to methionine 671 is disordered. The segment covering serine 609–isoleucine 627 has biased composition (polar residues). The segment covering glutamine 628–proline 642 has biased composition (basic and acidic residues).

In terms of assembly, forms homodimers and heterodimers with FOXP1 and FOXP2. Dimerization is required for DNA-binding. Expressed in the adult heart, brain, spleen lung, liver, kidney and testes.

Its subcellular location is the nucleus. Transcriptional repressor that represses lung-specific expression. In Mus musculus (Mouse), this protein is Forkhead box protein P4.